A 146-amino-acid chain; its full sequence is UPF0178 protein BCG9842_B2187 (146 aa).

It belongs to the UPF0178 family.

The polypeptide is UPF0178 protein BCG9842_B2187 (Bacillus cereus (strain G9842)).